A 303-amino-acid polypeptide reads, in one-letter code: RELT-like protein 2 (303 aa).

A helical transmembrane segment spans residues 15–35 (LYMLFLLVLVFFLMGLVGFMI). Disordered stretches follow at residues 46–67 (CRTS…DDDM) and 132–303 (CLHC…AGSM). At serine 52 the chain carries Phosphoserine. 2 stretches are compositionally biased toward basic and acidic residues: residues 148 to 158 (RSKEGKSRPRT) and 172 to 188 (THIE…DGSP). Residues 194 to 212 (GSGGGQDPGGGQGSGGGQP) show a composition bias toward gly residues. Residues 278 to 296 (QEANGQPSKPDTSDHQVSL) are compositionally biased toward polar residues.

This sequence belongs to the RELT family. In terms of assembly, interacts with RELT, RELL1 and OXSR1. Interacts with PLSCR1. Interacts with TRAF2. Phosphorylated in vitro by OXSR1. Primarily expressed in spleen, thymus, testis, peripheral blood leukocytes, brain and placenta. Not detected in prostate, ovary, small intestine, colon, heart, lung, liver, skeletal muscle, kidney and pancreas.

The protein resides in the cell membrane. Functionally, induces activation of MAPK14/p38 cascade, when overexpressed. Induces apoptosis, when overexpressed. This chain is RELT-like protein 2 (RELL2), found in Homo sapiens (Human).